Consider the following 502-residue polypeptide: Probable cytosol aminopeptidase (502 aa).

Mn(2+) contacts are provided by Lys270 and Asp275. Residue Lys282 is part of the active site. 3 residues coordinate Mn(2+): Asp293, Asp352, and Glu354. Residue Arg356 is part of the active site.

The protein belongs to the peptidase M17 family. Mn(2+) serves as cofactor.

The protein localises to the cytoplasm. The catalysed reaction is Release of an N-terminal amino acid, Xaa-|-Yaa-, in which Xaa is preferably Leu, but may be other amino acids including Pro although not Arg or Lys, and Yaa may be Pro. Amino acid amides and methyl esters are also readily hydrolyzed, but rates on arylamides are exceedingly low.. It catalyses the reaction Release of an N-terminal amino acid, preferentially leucine, but not glutamic or aspartic acids.. In terms of biological role, presumably involved in the processing and regular turnover of intracellular proteins. Catalyzes the removal of unsubstituted N-terminal amino acids from various peptides. This Buchnera aphidicola subsp. Schizaphis graminum (strain Sg) protein is Probable cytosol aminopeptidase.